We begin with the raw amino-acid sequence, 548 residues long: Biotin-dependent acetyl-/propionyl-coenzyme A carboxylase beta5 subunit (548 aa).

The tract at residues 1-23 (MTSVTDRSAHSAERSTEHTIDIH) is disordered. Positions 7-21 (RSAHSAERSTEHTID) are enriched in basic and acidic residues. The CoA carboxyltransferase N-terminal domain maps to 25 to 281 (TAGKLAELHK…NNSTDAPRYQ (257 aa)). A CoA carboxyltransferase C-terminal domain is found at 295–541 (DEDLELDTLI…ERKIAQLPPK (247 aa)).

It belongs to the AccD/PCCB family. As to quaternary structure, forms homohexamers. The biotin-dependent acyl-CoA carboxylase complex is composed of AccA3, which contains the biotin carboxylase (BC) and biotin carboxyl carrier protein (BCCP) domains, and AccD5, which contains the carboxyl transferase (CT) domain. The AccA3/AccD5 complex forms a dodecamer, and can associate with the epsilon subunit AccE5 (Rv3280), which stimulates carboxylation by the complex. Is also part of the long-chain acyl-CoA carboxylase (LCC) complex, which is composed of AccA3, AccD4, AccD5 and AccE5. The four subunits are essential for activity, but AccD5, together with AccE5, probably plays a structural role rather than a catalytic one.

It catalyses the reaction N(6)-carboxybiotinyl-L-lysyl-[protein] + acetyl-CoA = N(6)-biotinyl-L-lysyl-[protein] + malonyl-CoA. The catalysed reaction is N(6)-carboxybiotinyl-L-lysyl-[protein] + propanoyl-CoA = methylmalonyl-CoA + N(6)-biotinyl-L-lysyl-[protein]. It functions in the pathway lipid metabolism; mycolic acid biosynthesis. Its activity is regulated as follows. Carboxylase activity of the AccA3/AccD5 complex is stimulated by interaction with AccE5. Component of a biotin-dependent acyl-CoA carboxylase complex. This subunit transfers the CO2 from carboxybiotin to the CoA ester substrate. When associated with the alpha3 subunit AccA3, is involved in the carboxylation of acetyl-CoA and propionyl-CoA, with a preference for propionyl-CoA. Is also required for the activity of the long-chain acyl-CoA carboxylase (LCC) complex. In Mycobacterium tuberculosis (strain ATCC 25618 / H37Rv), this protein is Biotin-dependent acetyl-/propionyl-coenzyme A carboxylase beta5 subunit.